The chain runs to 356 residues: Protein pelota homolog (356 aa).

It belongs to the eukaryotic release factor 1 family. Pelota subfamily. In terms of assembly, monomer. Requires a divalent metal cation as cofactor.

The protein resides in the cytoplasm. May function in recognizing stalled ribosomes, interact with stem-loop structures in stalled mRNA molecules, and effect endonucleolytic cleavage of the mRNA. May play a role in the release non-functional ribosomes and degradation of damaged mRNAs. Has endoribonuclease activity. The polypeptide is Protein pelota homolog (Aeropyrum pernix (strain ATCC 700893 / DSM 11879 / JCM 9820 / NBRC 100138 / K1)).